Consider the following 448-residue polypeptide: tRNA-2-methylthio-N(6)-dimethylallyladenosine synthase (448 aa).

Residues 2–120 form the MTTase N-terminal domain; the sequence is KKYRIIVFGC…LPELIGKVIE (119 aa). Residues Cys-11, Cys-47, Cys-81, Cys-158, Cys-162, and Cys-165 each contribute to the [4Fe-4S] cluster site. Positions 144-374 constitute a Radical SAM core domain; sequence RKEGVRAWVT…IKLQNKISLE (231 aa). Residues 377–440 form the TRAM domain; sequence EEEVGQTQEV…LAHLTGILSY (64 aa).

The protein belongs to the methylthiotransferase family. MiaB subfamily. Monomer. [4Fe-4S] cluster is required as a cofactor.

Its subcellular location is the cytoplasm. The catalysed reaction is N(6)-dimethylallyladenosine(37) in tRNA + (sulfur carrier)-SH + AH2 + 2 S-adenosyl-L-methionine = 2-methylsulfanyl-N(6)-dimethylallyladenosine(37) in tRNA + (sulfur carrier)-H + 5'-deoxyadenosine + L-methionine + A + S-adenosyl-L-homocysteine + 2 H(+). In terms of biological role, catalyzes the methylthiolation of N6-(dimethylallyl)adenosine (i(6)A), leading to the formation of 2-methylthio-N6-(dimethylallyl)adenosine (ms(2)i(6)A) at position 37 in tRNAs that read codons beginning with uridine. This is tRNA-2-methylthio-N(6)-dimethylallyladenosine synthase from Pelotomaculum thermopropionicum (strain DSM 13744 / JCM 10971 / SI).